Here is a 314-residue protein sequence, read N- to C-terminus: Acetyl-coenzyme A carboxylase carboxyl transferase subunit alpha (314 aa).

One can recognise a CoA carboxyltransferase C-terminal domain in the interval 32 to 289; sequence EIDMLEASLE…KSAFVEQLDS (258 aa).

It belongs to the AccA family. As to quaternary structure, acetyl-CoA carboxylase is a heterohexamer composed of biotin carboxyl carrier protein (AccB), biotin carboxylase (AccC) and two subunits each of ACCase subunit alpha (AccA) and ACCase subunit beta (AccD).

Its subcellular location is the cytoplasm. It carries out the reaction N(6)-carboxybiotinyl-L-lysyl-[protein] + acetyl-CoA = N(6)-biotinyl-L-lysyl-[protein] + malonyl-CoA. It participates in lipid metabolism; malonyl-CoA biosynthesis; malonyl-CoA from acetyl-CoA: step 1/1. Component of the acetyl coenzyme A carboxylase (ACC) complex. First, biotin carboxylase catalyzes the carboxylation of biotin on its carrier protein (BCCP) and then the CO(2) group is transferred by the carboxyltransferase to acetyl-CoA to form malonyl-CoA. This is Acetyl-coenzyme A carboxylase carboxyl transferase subunit alpha from Staphylococcus aureus (strain bovine RF122 / ET3-1).